We begin with the raw amino-acid sequence, 145 residues long: UPF0179 protein MmarC6_0993 (145 aa).

The protein belongs to the UPF0179 family.

The polypeptide is UPF0179 protein MmarC6_0993 (Methanococcus maripaludis (strain C6 / ATCC BAA-1332)).